We begin with the raw amino-acid sequence, 429 residues long: 3-phosphoshikimate 1-carboxyvinyltransferase (429 aa).

Residues Lys-23, Ser-24, and Arg-28 each coordinate 3-phosphoshikimate. Residue Lys-23 participates in phosphoenolpyruvate binding. Residues Gly-95 and Arg-123 each coordinate phosphoenolpyruvate. 3-phosphoshikimate-binding residues include Ser-168, Gln-170, Asp-316, and Lys-343. Position 170 (Gln-170) interacts with phosphoenolpyruvate. Catalysis depends on Asp-316, which acts as the Proton acceptor. Phosphoenolpyruvate is bound by residues Arg-347 and Arg-389.

This sequence belongs to the EPSP synthase family. In terms of assembly, monomer.

Its subcellular location is the cytoplasm. The catalysed reaction is 3-phosphoshikimate + phosphoenolpyruvate = 5-O-(1-carboxyvinyl)-3-phosphoshikimate + phosphate. The protein operates within metabolic intermediate biosynthesis; chorismate biosynthesis; chorismate from D-erythrose 4-phosphate and phosphoenolpyruvate: step 6/7. In terms of biological role, catalyzes the transfer of the enolpyruvyl moiety of phosphoenolpyruvate (PEP) to the 5-hydroxyl of shikimate-3-phosphate (S3P) to produce enolpyruvyl shikimate-3-phosphate and inorganic phosphate. In Bacillus anthracis (strain A0248), this protein is 3-phosphoshikimate 1-carboxyvinyltransferase.